The sequence spans 539 residues: Lipid scramblase CLPTM1L (539 aa).

Residues 1-10 (MWSGRSSFTS) lie on the Cytoplasmic side of the membrane. The chain crosses the membrane as a helical span at residues 11–31 (LVVGVFLVYVVHTCWVMYGIV). Residues 32–285 (YTRPCSGDSN…LKGIFVDTNL (254 aa)) lie on the Extracellular side of the membrane. N-linked (GlcNAc...) asparagine glycans are attached at residues N91 and N101. Residues 286–306 (YLLALTFFVAAFHLLFDFLAF) form a helical membrane-spanning segment. Residues 307-325 (KSDISFWKKKKSMIGMSTK) lie on the Cytoplasmic side of the membrane. A helical membrane pass occupies residues 326–342 (AVLWRCFSTVVIFLFLL). The Extracellular segment spans residues 343-403 (DEQTSLLVLI…TEKYDAQAMK (61 aa)). The helical transmembrane segment at 404 to 424 (YLSYLLYPLCVGGAVYSLLNI) threads the bilayer. At 425–429 (KYKSW) the chain is on the cytoplasmic side. A helical membrane pass occupies residues 430 to 450 (YSWLINSFVNGVYAFGFLFML). Over 451–539 (PQLFVNYKMK…EQPKRKPHPD (89 aa)) the chain is Extracellular.

Belongs to the CLPTM1 family.

The protein localises to the endoplasmic reticulum membrane. The enzyme catalyses a 6-(alpha-D-glucosaminyl)-1-(1,2-diacyl-sn-glycero-3-phospho)-1D-myo-inositol(in) = a 6-(alpha-D-glucosaminyl)-1-(1,2-diacyl-sn-glycero-3-phospho)-1D-myo-inositol(out). It carries out the reaction 6-(alpha-D-glucosaminyl)-(1-octadecanoyl,2-(9Z)-octadecenoyl-sn-glycero-3-phospho)-1D-myo-inositol(in) = 6-(alpha-D-glucosaminyl)-(1-octadecanoyl,2-(9Z)-octadecenoyl-sn-glycero-3-phospho)-1D-myo-inositol(out). The catalysed reaction is a 1,2-diacyl-sn-glycero-3-phospho-(1D-myo-inositol)(in) = a 1,2-diacyl-sn-glycero-3-phospho-(1D-myo-inositol)(out). It catalyses the reaction a 1,2-diacyl-sn-glycero-3-phosphocholine(in) = a 1,2-diacyl-sn-glycero-3-phosphocholine(out). The enzyme catalyses a 1,2-diacyl-sn-glycero-3-phosphoethanolamine(in) = a 1,2-diacyl-sn-glycero-3-phosphoethanolamine(out). In terms of biological role, scramblase that mediates the translocation of glucosaminylphosphatidylinositol (alpha-D-GlcN-(1-6)-(1,2-diacyl-sn-glycero-3-phospho)-1D-myo-inositol, GlcN-PI) across the endoplasmic reticulum (ER) membrane, from the cytosolic leaflet to the luminal leaflet of the ER membrane, where it participates in the biosynthesis of glycosylphosphatidylinositol (GPI). GPI is a lipid glycoconjugate involved in post-translational modification of proteins. Can also translocate 1,2-diacyl-sn-glycero-3-phospho-(1D-myo-inositol) (phosphatidylinositol or PI), as well as several other phospholipids (1,2-diacyl-sn-glycero-3-phosphocholine, 1,2-diacyl-sn-glycero-3-phosphoethanolamine), and N-acetylglucosaminylphosphatidylinositol (GlcNAc-PI) in vitro. This is Lipid scramblase CLPTM1L (Clptm1l) from Mus musculus (Mouse).